The following is a 75-amino-acid chain: Small ribosomal subunit protein bS18 (75 aa).

It belongs to the bacterial ribosomal protein bS18 family. Part of the 30S ribosomal subunit. Forms a tight heterodimer with protein bS6.

Its function is as follows. Binds as a heterodimer with protein bS6 to the central domain of the 16S rRNA, where it helps stabilize the platform of the 30S subunit. This chain is Small ribosomal subunit protein bS18, found in Dinoroseobacter shibae (strain DSM 16493 / NCIMB 14021 / DFL 12).